The sequence spans 922 residues: Chaperone protein ClpC, chloroplastic (922 aa).

A chloroplast-targeting transit peptide spans 1 to 72 (MARVLAQSLS…RPGLDFHSKV (72 aa)). The 143-residue stretch at 92 to 234 (FERFTEKAIK…RTQVIRMVGE (143 aa)) folds into the Clp R domain. 2 repeat regions span residues 95–160 (FTEK…IGRG) and 170–234 (FTPR…MVGE). Residues 255 to 502 (LEEYGTNLTK…RVRLQHAQLP (248 aa)) are i. 300 to 307 (GEPGVGKT) contacts ATP. A UVR domain is found at 509-544 (DKEVRKIVKEKEEYVRNQDFEKAGELRDKEMDLKAQ). The tract at residues 569-760 (VTEVDIQHIV…LLIMTSNVGS (192 aa)) is II. 643–650 (GPTGVGKS) serves as a coordination point for ATP.

This sequence belongs to the ClpA/ClpB family. ClpC subfamily.

Its subcellular location is the plastid. It is found in the chloroplast. In terms of biological role, molecular chaperone that may interact with a ClpP-like protease involved in degradation of denatured proteins in the chloroplast. This is Chaperone protein ClpC, chloroplastic from Pisum sativum (Garden pea).